Here is a 1005-residue protein sequence, read N- to C-terminus: EvC complex member EVC (1005 aa).

Residues 1 to 21 lie on the Extracellular side of the membrane; it reads MTCTKDARLQLGREALQAAPT. A helical membrane pass occupies residues 22–42; it reads LLVPAVLLGGVLGLGLGLWLG. Residues 43-1005 lie on the Cytoplasmic side of the membrane; the sequence is CRASHLRARL…SKILQKGSNL (963 aa). Disordered stretches follow at residues 58–98, 150–180, 834–853, and 914–1005; these read KRLL…EVCE, HQPAEASPASSLGSLSQAGKEDGSSSSSMRS, PSLESQTADGTHGASQGVQQ, and LPEN…GSNL. Polar residues-rich tracts occupy residues 157–166 and 835–853; these read PASSLGSLSQ and SLESQTADGTHGASQGVQQ. Residues 939–956 show a composition bias toward basic and acidic residues; that stretch reads PPREREDLGTPNDDHLAL. Over residues 993-1005 the composition is skewed to polar residues; it reads ESTSKILQKGSNL.

As to quaternary structure, component of the EvC complex composed of EFCAB7, IQCE, EVC2 and EVC; built from two subcomplexes, EVC2:EVC and EFCAB7:IQCE. Interacts with EVC2. Interacts with EFCAB7. Interacts with IQCE. Expressed in the developing skeleton and the orofacial region. Expression is general to all the cartilaginous components of the skeleton, including the chondrocranium, the vertebrae, the rib cage, and the axial skeleton by 15.5 dpc.

It is found in the cell membrane. Its subcellular location is the cytoplasm. It localises to the cytoskeleton. The protein localises to the cilium basal body. The protein resides in the cell projection. It is found in the cilium. Its subcellular location is the cilium membrane. Its function is as follows. Component of the EvC complex that positively regulates ciliary Hedgehog (Hh) signaling. Involved in endochondral growth and skeletal development. The protein is EvC complex member EVC (Evc) of Mus musculus (Mouse).